A 192-amino-acid polypeptide reads, in one-letter code: 3-hydroxyanthranilate 3,4-dioxygenase 1 (192 aa).

Arg-50 is a binding site for O2. The Fe cation site is built by His-54, Glu-60, and His-102. Residue Glu-60 coordinates substrate. 2 residues coordinate substrate: Arg-106 and Glu-116. A divalent metal cation-binding residues include Cys-131, Cys-134, Cys-168, and Cys-171.

This sequence belongs to the 3-HAO family. Fe(2+) is required as a cofactor.

It is found in the cytoplasm. It catalyses the reaction 3-hydroxyanthranilate + O2 = (2Z,4Z)-2-amino-3-carboxymuconate 6-semialdehyde. It participates in cofactor biosynthesis; NAD(+) biosynthesis; quinolinate from L-kynurenine: step 3/3. In terms of biological role, catalyzes the oxidative ring opening of 3-hydroxyanthranilate to 2-amino-3-carboxymuconate semialdehyde, which spontaneously cyclizes to quinolinate. The sequence is that of 3-hydroxyanthranilate 3,4-dioxygenase 1 (bna1-1) from Aspergillus fumigatus (strain CBS 144.89 / FGSC A1163 / CEA10) (Neosartorya fumigata).